The following is a 566-amino-acid chain: NAD-dependent malic enzyme 3 (566 aa).

Tyr-105 functions as the Proton donor in the catalytic mechanism. Lys-178 (proton acceptor) is an active-site residue. Residues Glu-249, Asp-250, and Asp-273 each contribute to the a divalent metal cation site. NAD(+) contacts are provided by residues 306 to 309, Asn-423, and Asn-468; that span reads AGTA.

This sequence belongs to the malic enzymes family. The cofactor is Mg(2+). It depends on Mn(2+) as a cofactor.

It catalyses the reaction (S)-malate + NAD(+) = pyruvate + CO2 + NADH. The enzyme catalyses oxaloacetate + H(+) = pyruvate + CO2. Its function is as follows. Catalyzes the decarboxylation of malate to pyruvate. Can use NAD and NADP, but with a strong preference for NAD. Can also catalyze the decarboxylation of oxaloacetate. Involved in keeping the ATP levels high. The sequence is that of NAD-dependent malic enzyme 3 (malS) from Bacillus subtilis (strain 168).